Consider the following 393-residue polypeptide: Succinate--CoA ligase [ADP-forming] subunit beta (393 aa).

The region spanning 9–245 is the ATP-grasp domain; sequence KMLFAQYGIP…PSQEDKCETY (237 aa). ATP is bound by residues Lys46, 53–55, Glu99, Ile102, and Glu107; that span reads GRG. Residues Asn200 and Asp214 each contribute to the Mg(2+) site. Substrate contacts are provided by residues Asn265 and 322–324; that span reads GIV.

Belongs to the succinate/malate CoA ligase beta subunit family. As to quaternary structure, heterotetramer of two alpha and two beta subunits. The cofactor is Mg(2+).

It catalyses the reaction succinate + ATP + CoA = succinyl-CoA + ADP + phosphate. The enzyme catalyses GTP + succinate + CoA = succinyl-CoA + GDP + phosphate. The protein operates within carbohydrate metabolism; tricarboxylic acid cycle; succinate from succinyl-CoA (ligase route): step 1/1. Functionally, succinyl-CoA synthetase functions in the citric acid cycle (TCA), coupling the hydrolysis of succinyl-CoA to the synthesis of either ATP or GTP and thus represents the only step of substrate-level phosphorylation in the TCA. The beta subunit provides nucleotide specificity of the enzyme and binds the substrate succinate, while the binding sites for coenzyme A and phosphate are found in the alpha subunit. In Baumannia cicadellinicola subsp. Homalodisca coagulata, this protein is Succinate--CoA ligase [ADP-forming] subunit beta.